Reading from the N-terminus, the 657-residue chain is Probable alpha-galactosidase D (657 aa).

An N-terminal signal peptide occupies residues Met-1–Gly-16. Residues Asn-47 and Asn-91 are each glycosylated (N-linked (GlcNAc...) asparagine). Cys-124 and Cys-157 are oxidised to a cystine. The Nucleophile role is filled by Asp-155. 2 N-linked (GlcNAc...) asparagine glycosylation sites follow: Asn-182 and Asn-191. Residue Glu-200–Asp-204 participates in substrate binding. Asp-222 functions as the Proton donor in the catalytic mechanism. N-linked (GlcNAc...) asparagine glycans are attached at residues Asn-291, Asn-438, Asn-460, Asn-505, Asn-539, Asn-543, and Asn-582.

This sequence belongs to the glycosyl hydrolase 27 family.

It is found in the secreted. The catalysed reaction is Hydrolysis of terminal, non-reducing alpha-D-galactose residues in alpha-D-galactosides, including galactose oligosaccharides, galactomannans and galactolipids.. Its function is as follows. Hydrolyzes a variety of simple alpha-D-galactoside as well as more complex molecules such as oligosaccharides and polysaccharides. In Aspergillus oryzae (strain ATCC 42149 / RIB 40) (Yellow koji mold), this protein is Probable alpha-galactosidase D (aglD).